Here is a 419-residue protein sequence, read N- to C-terminus: G protein-activated inward rectifier potassium channel 4 (419 aa).

The disordered stretch occupies residues 1–24 (MAGDSRNAMNQDMEIGVTPRDPKK). Over 1–86 (MAGDSRNAMN…LFTTLVDLKW (86 aa)) the chain is Cytoplasmic. At Ser-5 the chain carries Phosphoserine. A helical transmembrane segment spans residues 87 to 111 (RFNLLVFTMVYTITWLFFGFIWWLI). Residues 112–135 (AYIRGDLDHVGDREWIPCVENLSG) are Extracellular-facing. The segment at residues 136–147 (FVSAFLFSIETE) is an intramembrane region (helical; Pore-forming). An intramembrane region (pore-forming) is located at residues 148–154 (TTIGYGF). Residues 149–154 (TIGYGF) carry the Selectivity filter motif. Topologically, residues 155–163 (RVITEKCPE) are extracellular. Residues 164 to 185 (GIVLLLVQAILGSIVNAFMVGC) form a helical membrane-spanning segment. Over 186-419 (MFVKISQPKK…SGSQETKDSA (234 aa)) the chain is Cytoplasmic. The segment at 381–419 (PSPPLPGGCVGAELGAEAEQEGEEEPEGLSGSQETKDSA) is disordered. Positions 396-407 (AEAEQEGEEEPE) are enriched in acidic residues.

The protein belongs to the inward rectifier-type potassium channel (TC 1.A.2.1) family. KCNJ5 subfamily. Associates with KCNJ3/GIRK1 or KCNJ6/GIRK2 to form a G-protein-activated heteromultimer pore-forming unit. The resulting inward current is much larger.

The protein localises to the membrane. It catalyses the reaction K(+)(in) = K(+)(out). Heteromultimer composed of KCNJ3/GIRK1 and KCNJ5/GIRK4 is activated by phosphatidylinositol 4,5 biphosphate (PtdIns(4,5)P2). Inward rectifier potassium channels are characterized by a greater tendency to allow potassium to flow into the cell rather than out of it. Their voltage dependence is regulated by the concentration of extracellular potassium; as external potassium is raised, the voltage range of the channel opening shifts to more positive voltages. The inward rectification is mainly due to the blockage of outward current by internal magnesium. This receptor plays a crucial role in regulating the heartbeat. Can be blocked by external barium. This potassium channel is controlled by G proteins. The polypeptide is G protein-activated inward rectifier potassium channel 4 (KCNJ5) (Bos taurus (Bovine)).